A 189-amino-acid chain; its full sequence is Elongation factor P (189 aa).

Lys-34 is modified (N6-(3,6-diaminohexanoyl)-5-hydroxylysine).

This sequence belongs to the elongation factor P family. In terms of processing, may be beta-lysylated on the epsilon-amino group of Lys-34 by the combined action of EpmA and EpmB, and then hydroxylated on the C5 position of the same residue by EpmC (if this protein is present). Lysylation is critical for the stimulatory effect of EF-P on peptide-bond formation. The lysylation moiety may extend toward the peptidyltransferase center and stabilize the terminal 3-CCA end of the tRNA. Hydroxylation of the C5 position on Lys-34 may allow additional potential stabilizing hydrogen-bond interactions with the P-tRNA.

The protein resides in the cytoplasm. It functions in the pathway protein biosynthesis; polypeptide chain elongation. In terms of biological role, involved in peptide bond synthesis. Alleviates ribosome stalling that occurs when 3 or more consecutive Pro residues or the sequence PPG is present in a protein, possibly by augmenting the peptidyl transferase activity of the ribosome. Modification of Lys-34 is required for alleviation. The protein is Elongation factor P of Idiomarina loihiensis (strain ATCC BAA-735 / DSM 15497 / L2-TR).